Reading from the N-terminus, the 824-residue chain is Protein-glutamine gamma-glutamyltransferase K (824 aa).

A compositionally biased stretch (basic and acidic residues) spans Met1–Arg10. 2 disordered regions span residues Met1–Ser44 and Asp61–Asp110. Thr20 is modified (phosphothreonine). Phosphoserine occurs at positions 22, 70, 92, 100, and 103. Over residues Pro65–Ser76 the composition is skewed to low complexity. A compositionally biased stretch (basic and acidic residues) spans Gly85–Ser100. Residues Cys385, His444, and Asp467 contribute to the active site. The Ca(2+) site is built by Asn507, Asp509, Glu556, and Glu561. Residues Arg801–Ala824 form a disordered region. At Ser812 the chain carries Phosphoserine.

Belongs to the transglutaminase superfamily. Transglutaminase family. Interacts with PLAAT4. The cofactor is Ca(2+). Palmitoylated. Post-translationally, the membrane anchorage region possesses a cluster of five cysteines within which fatty acid(s) may become thioester-linked. It is subject to phorbol ester-stimulated phosphorylation and is hypersensitive to proteolysis, which releases the enzyme in a soluble form. In terms of processing, tyrosine-phosphorylated.

It is found in the membrane. The catalysed reaction is L-glutaminyl-[protein] + L-lysyl-[protein] = [protein]-L-lysyl-N(6)-5-L-glutamyl-[protein] + NH4(+). Functionally, catalyzes the cross-linking of proteins and the conjugation of polyamines to proteins. Responsible for cross-linking epidermal proteins during formation of the stratum corneum. Involved in cell proliferation. The chain is Protein-glutamine gamma-glutamyltransferase K (Tgm1) from Rattus norvegicus (Rat).